The following is a 329-amino-acid chain: Serine/threonine-protein phosphatase PP2A catalytic subunit (329 aa).

Residues 1–25 form a disordered region; the sequence is MDNNMEIDAARSPEPHHLSPTTDPG. Residues 8–17 show a composition bias toward basic and acidic residues; that stretch reads DAARSPEPHH. Mn(2+)-binding residues include Asp-77, His-79, Asp-105, and Asn-137. Catalysis depends on His-138, which acts as the Proton donor. The Mn(2+) site is built by His-187 and His-261. Leu-329 is subject to Leucine methyl ester.

Belongs to the PPP phosphatase family. PP-2A subfamily. Mn(2+) serves as cofactor.

The enzyme catalyses O-phospho-L-seryl-[protein] + H2O = L-seryl-[protein] + phosphate. It carries out the reaction O-phospho-L-threonyl-[protein] + H2O = L-threonyl-[protein] + phosphate. In terms of biological role, involved in hyphal morphogenesis. The chain is Serine/threonine-protein phosphatase PP2A catalytic subunit (pphA) from Emericella nidulans (strain FGSC A4 / ATCC 38163 / CBS 112.46 / NRRL 194 / M139) (Aspergillus nidulans).